Reading from the N-terminus, the 263-residue chain is Endonuclease 8 (263 aa).

Catalysis depends on Pro-2, which acts as the Schiff-base intermediate with DNA. Glu-3 serves as the catalytic Proton donor. Lys-53 functions as the Proton donor; for beta-elimination activity in the catalytic mechanism. The DNA site is built by Gln-70, Arg-125, and Asn-169. An FPG-type zinc finger spans residues 229–263 (KVFHRDGEPCERCGSIIEKTTLSSRPFYWCPGCQH). Arg-253 serves as the catalytic Proton donor; for delta-elimination activity.

This sequence belongs to the FPG family. Zn(2+) is required as a cofactor.

It catalyses the reaction 2'-deoxyribonucleotide-(2'-deoxyribose 5'-phosphate)-2'-deoxyribonucleotide-DNA = a 3'-end 2'-deoxyribonucleotide-(2,3-dehydro-2,3-deoxyribose 5'-phosphate)-DNA + a 5'-end 5'-phospho-2'-deoxyribonucleoside-DNA + H(+). Involved in base excision repair of DNA damaged by oxidation or by mutagenic agents. Acts as a DNA glycosylase that recognizes and removes damaged bases. Has a preference for oxidized pyrimidines, such as thymine glycol, 5,6-dihydrouracil and 5,6-dihydrothymine. Has AP (apurinic/apyrimidinic) lyase activity and introduces nicks in the DNA strand. Cleaves the DNA backbone by beta-delta elimination to generate a single-strand break at the site of the removed base with both 3'- and 5'-phosphates. This Escherichia coli O17:K52:H18 (strain UMN026 / ExPEC) protein is Endonuclease 8.